The sequence spans 97 residues: Large ribosomal subunit protein bL27 (97 aa).

Over residues 1–10 the composition is skewed to polar residues; sequence MVKLNLSNLQ. Positions 1–12 are excised as a propeptide; it reads MVKLNLSNLQHF. Residues 1-38 are disordered; it reads MVKLNLSNLQHFAHKKGGGSTSNGRDSQAKRLGAKAAD.

This sequence belongs to the bacterial ribosomal protein bL27 family. In terms of processing, the N-terminus is cleaved by ribosomal processing cysteine protease Prp.

The sequence is that of Large ribosomal subunit protein bL27 from Streptococcus equi subsp. zooepidemicus (strain H70).